A 359-amino-acid polypeptide reads, in one-letter code: WAT1-related protein At4g16620 (359 aa).

10 helical membrane-spanning segments follow: residues 5–25 (ETLIEAGIIGGLAGAQVIYAG), 41–61 (LLIVILCTFASVLLITPLAFL), 77–97 (IKLVLVALAGVTLFQGLFLEG), 105–125 (MATAMPNLCPAFIFVIAWAAG), 143–163 (TVLCVMGALIMSLMHSTTATL), 183–203 (ILGCLYLLLAICGLSSSIVLQ), 206–226 (ILAEFPAPISMFSMVSLMGGI), 246–266 (VIGLGHLVGYAILGGLVSGGG), 279–299 (PVIVSLFSPIATVVCVVVSAF), and 305–325 (FNLGSFAGMALMFGGLYFVLW). The EamA 1 domain occupies 30–154 (LSQLLSLGID…LCVMGALIMS (125 aa)). In terms of domain architecture, EamA 2 spans 206-324 (ILAEFPAPIS…LMFGGLYFVL (119 aa)).

Belongs to the drug/metabolite transporter (DMT) superfamily. Plant drug/metabolite exporter (P-DME) (TC 2.A.7.4) family.

It is found in the membrane. The protein is WAT1-related protein At4g16620 of Arabidopsis thaliana (Mouse-ear cress).